The following is a 370-amino-acid chain: Cytoplasmic dynein intermediate light chain DYN3 (370 aa).

The protein belongs to the dynein light intermediate chain DYN3 family. The cytoplasmic dynein is composed of at least two heavy chains and a number of intermediate and light chains.

The protein resides in the cytoplasm. It is found in the cytoskeleton. In terms of biological role, component of the cytoplasmic dynein which acts as a motor for the intracellular retrograde motility of vesicles and organelles along microtubules. May play an important role in the proper orientation of the mitotic spindle into the budding daughter cell yeast. Probably required for normal progression of the cell cycle. This Kluyveromyces lactis (strain ATCC 8585 / CBS 2359 / DSM 70799 / NBRC 1267 / NRRL Y-1140 / WM37) (Yeast) protein is Cytoplasmic dynein intermediate light chain DYN3 (DYN3).